The primary structure comprises 383 residues: Dual-specificity RNA methyltransferase RlmN (383 aa).

E93 serves as the catalytic Proton acceptor. Residues 99–339 (EETRGTLCVS…TTIRKTRGDD (241 aa)) form the Radical SAM core domain. A disulfide bond links C106 and C344. 3 residues coordinate [4Fe-4S] cluster: C113, C117, and C120. Residues 170-171 (GE), S202, 224-226 (SLH), and N301 each bind S-adenosyl-L-methionine. C344 serves as the catalytic S-methylcysteine intermediate.

The protein belongs to the radical SAM superfamily. RlmN family. [4Fe-4S] cluster is required as a cofactor.

The protein localises to the cytoplasm. The catalysed reaction is adenosine(2503) in 23S rRNA + 2 reduced [2Fe-2S]-[ferredoxin] + 2 S-adenosyl-L-methionine = 2-methyladenosine(2503) in 23S rRNA + 5'-deoxyadenosine + L-methionine + 2 oxidized [2Fe-2S]-[ferredoxin] + S-adenosyl-L-homocysteine. It carries out the reaction adenosine(37) in tRNA + 2 reduced [2Fe-2S]-[ferredoxin] + 2 S-adenosyl-L-methionine = 2-methyladenosine(37) in tRNA + 5'-deoxyadenosine + L-methionine + 2 oxidized [2Fe-2S]-[ferredoxin] + S-adenosyl-L-homocysteine. Specifically methylates position 2 of adenine 2503 in 23S rRNA and position 2 of adenine 37 in tRNAs. m2A2503 modification seems to play a crucial role in the proofreading step occurring at the peptidyl transferase center and thus would serve to optimize ribosomal fidelity. The sequence is that of Dual-specificity RNA methyltransferase RlmN from Ralstonia pickettii (strain 12J).